The chain runs to 391 residues: Zinc finger protein ubi-d4 (391 aa).

A2 bears the N-acetylalanine mark. Glycyl lysine isopeptide (Lys-Gly) (interchain with G-Cter in SUMO2) cross-links involve residues K10, K99, K107, and K108. Disordered regions lie at residues 79–147 (WRKK…GEFP) and 165–199 (DDLD…KLDA). Composition is skewed to basic and acidic residues over residues 100-110 (PDTDQTLKKEG) and 126-140 (DPLE…RVDD). The residue at position 142 (S142) is a Phosphoserine. Residues 165 to 174 (DDLDDEDYEE) are compositionally biased toward acidic residues. Phosphotyrosine is present on Y172. T176 is subject to Phosphothreonine. Glycyl lysine isopeptide (Lys-Gly) (interchain with G-Cter in SUMO2) cross-links involve residues K178 and K196. S200 carries the post-translational modification Phosphoserine. The segment at 209 to 232 (YACDICGKRYKNRPGLSYHYAHSH) adopts a C2H2-type zinc-finger fold. Positions 233–266 (LAEEEGEDKEDSRPPTPVSQRSEEQKSKKGPDGL) are disordered. S244 carries the post-translational modification Phosphoserine. Over residues 253-263 (RSEEQKSKKGP) the composition is skewed to basic and acidic residues. 2 PHD-type zinc fingers span residues 270 to 330 (NNYC…CKCC) and 327 to 377 (CKCC…CLDL). S280 bears the Phosphoserine mark. K281 participates in a covalent cross-link: Glycyl lysine isopeptide (Lys-Gly) (interchain with G-Cter in SUMO2).

It belongs to the requiem/DPF family. As to quaternary structure, interacts with the nucleosomes, in particular nucleosomes bearing histone H3 crotonylated at 'Lys-14' (H3K14cr) for which DPF2 has high affinity. Also interacts (via PHD-type zinc finger domains) with histone H3 butyrylated at 'Lys-14' (H3K14bu), histone H3 propionylated at 'Lys-14' (H3K14pr), and histone H3 acetylated at 'Lys-14' (H3K14ac). Interacts with histone H3 acetylated at 'Lys-9' (H3K9ac), histone H3 di-methylated at 'Lys-9' (H3K9me2), and histone H3 tri-methylated at 'Lys-9' (H3K9me3). Interacts with histone H4 acetylated at 'Lys-12' (H4K12ac). Interacts with histone H4 acetylated at 'Lys-16' (H4K16ac). Interacts with SWI/SNF complex components. Interacts with SMARCA2, SMARCA4, SMARCB1 and SMARCD1. Interacts with SMARCC1, SMARCC2 and ACTL6A. Interacts with RUNX1. In embryo, highest levels are seen in brain, eyes, thymus and olfactory epithelium in nose, whereas several other tissues, including the musculoskeletal system, show moderate expression. In adult, higher expression in testis, medium in thymus and spleen, lower in certain parts of the brain as the hippocampus. No expression in adult heart, lung, liver, duodenum and kidney.

Its subcellular location is the nucleus. The protein localises to the cytoplasm. Plays an active role in transcriptional regulation by binding modified histones H3 and H4. Is a negative regulator of myeloid differentiation of hematopoietic progenitor cells. Might also have a role in the development and maturation of lymphoid cells. Involved in the regulation of non-canonical NF-kappa-B pathway. The sequence is that of Zinc finger protein ubi-d4 (Dpf2) from Mus musculus (Mouse).